Reading from the N-terminus, the 1883-residue chain is Endoribonuclease Dicer homolog 1 (1883 aa).

Disordered stretches follow at residues 71-97 (AESSPAPPPPPPPPLPEPVPVAPPELP), 129-188 (ARKE…DDRR), and 221-262 (RSGT…EKPV). Over residues 75-96 (PAPPPPPPPPLPEPVPVAPPEL) the composition is skewed to pro residues. Composition is skewed to basic and acidic residues over residues 129-138 (ARKEPRRESH) and 228-262 (ESDREAKRARTQDGGSMEKKAEADRMGAAQREKPV). A Helicase ATP-binding domain is found at 274-413 (VLEQAKSRNT…QEDCAIKIRN (140 aa)). ATP is bound at residue 287–294 (LETGAGKT). Residues 358-361 (DECH) carry the DECH box motif. The interval 577 to 604 (KSETSDVEMQNTEKHNTNDLEEGELPDS) is disordered. The Helicase C-terminal domain maps to 629-789 (LIKILLKYQH…RTDLSHLDGT (161 aa)). Residues 817 to 912 (AVGLIHFYCS…LPDRGSGEGE (96 aa)) enclose the Dicer dsRNA-binding fold domain. A disordered region spans residues 901-928 (TLLPDRGSGEGEKTEQNDEGEPLPGTAR). Residues 907 to 916 (GSGEGEKTEQ) show a composition bias toward basic and acidic residues. One can recognise a PAZ domain in the interval 1163–1296 (HFSDYQNQGK…LPPELCLVHP (134 aa)). RNase III domains lie at 1320–1498 (LAVQ…VAGG) and 1538–1686 (FDTL…LDSG). The Mg(2+) site is built by E1576, D1672, and E1675. 2 consecutive DRBM domains span residues 1712-1775 (HPVR…VLKE) and 1797-1872 (FTRQ…LLNR).

This sequence belongs to the helicase family. Dicer subfamily. As to quaternary structure, may interact with ARGONAUTE1 or PINHEAD through their common PAZ domains. Requires Mg(2+) as cofactor. Mn(2+) serves as cofactor.

The protein resides in the nucleus. Functionally, involved in the RNA silencing pathway. Cleaves double-stranded RNA to produce microRNAs (miRNAs) of 21-24 nucleotides which target the selective destruction of complementary RNAs. Regulates by this way the development of the plant. May not be involved in small interfering RNAs (siRNAs) production. In Oryza sativa subsp. japonica (Rice), this protein is Endoribonuclease Dicer homolog 1 (DCL1).